The chain runs to 438 residues: Minor capsid protein p49 (438 aa).

This sequence belongs to the asfivirus p49 structural protein family.

The protein localises to the virion. Together with the penton and the other minor capsid proteins (M1249L, p17), forms a complicated network immediately below the outer capsid shell, stabilizing the whole capsid. Plays an essential role in the formation of infectious virus particles. Especially required for the formation of the capsid vertices. During virion assembly, associates with the membrane and probably mediates the docking of the penton complex to the inner membrane, where it recruits the capsomers to form the penton core. The polypeptide is Minor capsid protein p49 (Ornithodoros (relapsing fever ticks)).